We begin with the raw amino-acid sequence, 86 residues long: UPF0457 protein BCE33L2265 (86 aa).

This sequence belongs to the UPF0457 family.

The sequence is that of UPF0457 protein BCE33L2265 from Bacillus cereus (strain ZK / E33L).